The primary structure comprises 1042 residues: Probable inorganic carbon transporter subunit DabA (1042 aa).

Residues cysteine 462, aspartate 464, histidine 721, and cysteine 736 each coordinate Zn(2+).

Belongs to the inorganic carbon transporter (TC 9.A.2) DabA family. In terms of assembly, forms a complex with DabB. Zn(2+) is required as a cofactor.

The protein resides in the cell inner membrane. Its function is as follows. Part of an energy-coupled inorganic carbon pump. This chain is Probable inorganic carbon transporter subunit DabA, found in Nitrosomonas eutropha (strain DSM 101675 / C91 / Nm57).